The chain runs to 545 residues: Chaperonin GroEL (545 aa).

ATP is bound by residues 30-33 (TLGP), Lys-51, 87-91 (DGTTT), Gly-415, 479-481 (NAA), and Asp-495.

It belongs to the chaperonin (HSP60) family. Forms a cylinder of 14 subunits composed of two heptameric rings stacked back-to-back. Interacts with the co-chaperonin GroES.

It is found in the cytoplasm. The enzyme catalyses ATP + H2O + a folded polypeptide = ADP + phosphate + an unfolded polypeptide.. Together with its co-chaperonin GroES, plays an essential role in assisting protein folding. The GroEL-GroES system forms a nano-cage that allows encapsulation of the non-native substrate proteins and provides a physical environment optimized to promote and accelerate protein folding. The sequence is that of Chaperonin GroEL from Tolumonas auensis (strain DSM 9187 / NBRC 110442 / TA 4).